The chain runs to 142 residues: MGLKLNGRYISLILAVQIAYLVQAVRAAGKCDAVFKGFSDCLLKLGDSMANYPQGLDDKTNIKTVCTYWEDFHSCTVTALTDCQEGAKDMWDKLRKESKNLNIQGSLFELCGSGNGAAGSLLPAFPVLLVSLSAALATWLSF.

An N-terminal signal peptide occupies residues 1–27; it reads MGLKLNGRYISLILAVQIAYLVQAVRA. The GPI-anchor amidated glycine moiety is linked to residue Gly116. Positions 117 to 142 are cleaved as a propeptide — removed in mature form; sequence AAGSLLPAFPVLLVSLSAALATWLSF.

This sequence belongs to the neuritin family. In terms of assembly, component of the outer core of AMPAR complex. AMPAR complex consists of an inner core made of 4 pore-forming GluA/GRIA proteins (GRIA1, GRIA2, GRIA3 and GRIA4) and 4 major auxiliary subunits arranged in a twofold symmetry. One of the two pairs of distinct binding sites is occupied either by CNIH2, CNIH3 or CACNG2, CACNG3. The other harbors CACNG2, CACNG3, CACNG4, CACNG8 or GSG1L. This inner core of AMPAR complex is complemented by outer core constituents binding directly to the GluA/GRIA proteins at sites distinct from the interaction sites of the inner core constituents. Outer core constituents include at least PRRT1, PRRT2, CKAMP44/SHISA9, FRRS1L and NRN1. The proteins of the inner and outer core serve as a platform for other, more peripherally associated AMPAR constituents. Alone or in combination, these auxiliary subunits control the gating and pharmacology of the AMPAR complex and profoundly impact their biogenesis and protein processing.

The protein localises to the cell membrane. The protein resides in the synapse. In terms of biological role, promotes neurite outgrowth and especially branching of neuritic processes in primary hippocampal and cortical cells. This chain is Neuritin (NRN1), found in Homo sapiens (Human).